A 501-amino-acid chain; its full sequence is ADP,ATP carrier protein 3 (501 aa).

12 helical membrane passes run 23 to 43 (LKLF…FGAL), 59 to 79 (IISF…TILY), 90 to 110 (YIFY…AYII), 146 to 166 (YALM…LMFW), 183 to 203 (PVLG…LVFF), 227 to 247 (IMLQ…MFLF), 293 to 313 (IALL…PWKA), 326 to 346 (VNFM…FMII), 361 to 381 (LLTP…IIFI), 383 to 403 (EIGT…VGAI), 446 to 466 (FGKS…PTAT), and 470 to 490 (IIIY…WNII).

This sequence belongs to the ADP/ATP translocase tlc family.

It localises to the cell membrane. Its function is as follows. Provides the rickettsial cell with host ATP in exchange for rickettsial ADP. This is an obligate exchange system. This energy acquiring activity is an important component of rickettsial parasitism. This is ADP,ATP carrier protein 3 (tlcC) from Rickettsia prowazekii (strain Madrid E).